A 334-amino-acid polypeptide reads, in one-letter code: D-fructose 1,6-bisphosphatase class 2/sedoheptulose 1,7-bisphosphatase (334 aa).

Residues Asp-33, Glu-57, Asp-85, and Glu-88 each coordinate Mn(2+). Substrate contacts are provided by residues 88–90 (EGT), Tyr-119, 164–166 (RAR), and 186–188 (DGD). Position 213 (Glu-213) interacts with Mn(2+).

The protein belongs to the FBPase class 2 family. As to quaternary structure, homotetramer. The cofactor is Mn(2+).

The enzyme catalyses beta-D-fructose 1,6-bisphosphate + H2O = beta-D-fructose 6-phosphate + phosphate. The catalysed reaction is D-sedoheptulose 1,7-bisphosphate + H2O = D-sedoheptulose 7-phosphate + phosphate. Its pathway is carbohydrate biosynthesis; Calvin cycle. Catalyzes the hydrolysis of fructose 1,6-bisphosphate (Fru 1,6-P2) and sedoheptulose 1,7-bisphosphate (Sed 1,7-P2) to fructose 6-phosphate and sedoheptulose 7-phosphate, respectively. This Synechococcus sp. (strain CC9902) protein is D-fructose 1,6-bisphosphatase class 2/sedoheptulose 1,7-bisphosphatase.